A 394-amino-acid polypeptide reads, in one-letter code: Queuine tRNA-ribosyltransferase (394 aa).

The active-site Proton acceptor is D99. Substrate-binding positions include D99–F103, D153, Q195, and G222. The interval G253 to D259 is RNA binding. D272 (nucleophile) is an active-site residue. Positions T277–R281 are RNA binding; important for wobble base 34 recognition. The Zn(2+) site is built by C310, C312, C315, and H341.

It belongs to the queuine tRNA-ribosyltransferase family. Homodimer. Within each dimer, one monomer is responsible for RNA recognition and catalysis, while the other monomer binds to the replacement base PreQ1. Zn(2+) serves as cofactor.

The catalysed reaction is 7-aminomethyl-7-carbaguanine + guanosine(34) in tRNA = 7-aminomethyl-7-carbaguanosine(34) in tRNA + guanine. The protein operates within tRNA modification; tRNA-queuosine biosynthesis. Catalyzes the base-exchange of a guanine (G) residue with the queuine precursor 7-aminomethyl-7-deazaguanine (PreQ1) at position 34 (anticodon wobble position) in tRNAs with GU(N) anticodons (tRNA-Asp, -Asn, -His and -Tyr). Catalysis occurs through a double-displacement mechanism. The nucleophile active site attacks the C1' of nucleotide 34 to detach the guanine base from the RNA, forming a covalent enzyme-RNA intermediate. The proton acceptor active site deprotonates the incoming PreQ1, allowing a nucleophilic attack on the C1' of the ribose to form the product. After dissociation, two additional enzymatic reactions on the tRNA convert PreQ1 to queuine (Q), resulting in the hypermodified nucleoside queuosine (7-(((4,5-cis-dihydroxy-2-cyclopenten-1-yl)amino)methyl)-7-deazaguanosine). The protein is Queuine tRNA-ribosyltransferase of Deinococcus radiodurans (strain ATCC 13939 / DSM 20539 / JCM 16871 / CCUG 27074 / LMG 4051 / NBRC 15346 / NCIMB 9279 / VKM B-1422 / R1).